The sequence spans 556 residues: 2-isopropylmalate synthase (556 aa).

The Pyruvate carboxyltransferase domain occupies 33–307 (PIWCSSDLRD…DPELDFSDID (275 aa)). Positions 42, 246, 248, and 282 each coordinate Mg(2+). Positions 439–556 (ANTPYALISH…SLSQTQAKAA (118 aa)) are regulatory domain.

The protein belongs to the alpha-IPM synthase/homocitrate synthase family. LeuA type 2 subfamily. In terms of assembly, homodimer. The cofactor is Mg(2+).

The protein localises to the cytoplasm. It carries out the reaction 3-methyl-2-oxobutanoate + acetyl-CoA + H2O = (2S)-2-isopropylmalate + CoA + H(+). It participates in amino-acid biosynthesis; L-leucine biosynthesis; L-leucine from 3-methyl-2-oxobutanoate: step 1/4. Catalyzes the condensation of the acetyl group of acetyl-CoA with 3-methyl-2-oxobutanoate (2-ketoisovalerate) to form 3-carboxy-3-hydroxy-4-methylpentanoate (2-isopropylmalate). The polypeptide is 2-isopropylmalate synthase (Pseudomonas savastanoi pv. phaseolicola (strain 1448A / Race 6) (Pseudomonas syringae pv. phaseolicola (strain 1448A / Race 6))).